A 346-amino-acid chain; its full sequence is 3',5'-cyclic-nucleotide phosphodiesterase (346 aa).

The protein belongs to the cyclic nucleotide phosphodiesterase class-II family.

It carries out the reaction a nucleoside 3',5'-cyclic phosphate + H2O = a nucleoside 5'-phosphate + H(+). The protein is 3',5'-cyclic-nucleotide phosphodiesterase (cgs2) of Schizosaccharomyces pombe (strain 972 / ATCC 24843) (Fission yeast).